Here is a 740-residue protein sequence, read N- to C-terminus: MGKNKKQAAEGEEARRGSESSGSSAEPSGAVAELPSFKKTAGGARSGLIEQDAVDTIREQTAVKFADEDEVVEQDEAAQKTEAVASESSSLADKEECDESKLDHFRKFFRRTSSRSSDEGEGGGMMERFINMTGGGMVPVVTEAPEEDEEAGPDPTAEAEAAAREIMKAHHLSSGQSVDMMSMSSSGESGFFMPVAEHYDDEYNPEQEEEQRDDMSEATYVPPPQHVRGGVLGSLLRLYQNQPGGQAPQRPGLRKSAQTLSSETLPTGESYEMPKFKAKRPRGSKIPNPIKLKRKSAMSEARITVHIADLLQRHRFILRLCKAFMMYGAPTHRLEEYMVMTSRVLEIDSQFLYLPGCMVVSFGDTITRTSEVQLVRCSQGLNLWKLHQVHSIYKQVVHDIISVEDASRTIETIMAEKNLYPAWMCVLLYGFCASMVTPFAFGGDWINLVVSFGIGCCVGLLQFIVAQRSHVYSNVFEITASIVVSFCARALGSIPNSNICFGSTVQGSLALILPGYIILCGSLELQSRSLVAGSVRMFYAIIYSLFLGFGITLGAALFGWIYRDATNETVCEKELSPWFRFIFVPGFALGLSLINQARWSQIPVMVCIACSGYVVTYWSGQHFTASTEFTASIGAFVIGIMGNLYSRIWKGLAMTAMLPGIFVQVPSGIASKSTLLSSVQSANNMVSNGTNAAVNSVDGRTSISFGITMIQVCIGISVGLFASTLVVYPFGKKRTGLFTL.

3 disordered regions span residues 1–48 (MGKN…RSGL), 65–97 (FADE…KEEC), and 241–269 (NQPG…PTGE). Residues 7-18 (QAAEGEEARRGS) are compositionally biased toward basic and acidic residues. Low complexity predominate over residues 19 to 33 (ESSGSSAEPSGAVAE). Residues 67-76 (DEDEVVEQDE) are compositionally biased toward acidic residues. The span at 256 to 267 (SAQTLSSETLPT) shows a compositional bias: polar residues. Transmembrane regions (helical) follow at residues 422–442 (AWMC…FAFG), 445–465 (WINL…QFIV), 475–495 (VFEI…GSIP), 499–519 (ICFG…YIIL), 541–561 (IIYS…FGWI), 574–594 (ELSP…LSLI), 599–619 (WSQI…TYWS), 622–642 (HFTA…GIMG), 651–671 (GLAM…GIAS), and 707–727 (ITMI…TLVV).

Belongs to the ThrE exporter (TC 2.A.79) family.

The protein localises to the membrane. This chain is Pheromone-regulated membrane protein 10, found in Eremothecium gossypii (strain ATCC 10895 / CBS 109.51 / FGSC 9923 / NRRL Y-1056) (Yeast).